A 258-amino-acid polypeptide reads, in one-letter code: Protein CHAPERONE-LIKE PROTEIN OF POR1, chloroplastic (258 aa).

The N-terminal 48 residues, 1-48, are a transit peptide targeting the chloroplast; sequence MSSSLLLSGSTVSSSFIAPSKPSLVRNSSKTSLLPFRNVSRSFKTVKC. At Thr49 the chain carries N-acetylthreonine. The J-like domain required for holdase chaperone activity stretch occupies residues 67–122; the sequence is WDPYKRLGVSPYASEEEIWASRNFLLQQYAGHERSEESIEGAFEKLLMSSFIRRKK. 3 helical membrane passes run 162 to 182, 207 to 227, and 237 to 257; these read FLFAFMGGWSIMNSAEGGPAF, LIGIGALVAGWFCGSLIIPMI, and TLELLTSLVAYVFLFLSCTFL.

Belongs to the chaperone-like protein of POR1 protein family. Interacts with PORB in chloroplast. Interacts with PORA during plastid import. In terms of tissue distribution, expressed ubiquitously with higher levels in young leaves, flowers, and the root elongation zone.

Its subcellular location is the mitochondrion membrane. It localises to the plastid. The protein localises to the chloroplast envelope. The protein resides in the chloroplast thylakoid membrane. Its function is as follows. Essential protein required during embryogenesis. Exhibits holdase chaperone activity involved in the stabilization of NADPH:protochlorophyllide oxidoreductase (POR) proteins against photooxidative stress during POR proteins import into chloroplasts. Required for chloroplast biogenesis and development. When expressed in yeast, triggers mitochondria-mediated cell death associated with the loss of mitochondrial membrane potential. The sequence is that of Protein CHAPERONE-LIKE PROTEIN OF POR1, chloroplastic from Arabidopsis thaliana (Mouse-ear cress).